A 209-amino-acid chain; its full sequence is Inner membrane protein YjdF (209 aa).

Topologically, residues 1 to 7 (MTRTLKP) are periplasmic. A helical transmembrane segment spans residues 8–28 (LILNTSALTLTLILIYTGISA). The Cytoplasmic segment spans residues 29 to 31 (HDK). A helical membrane pass occupies residues 32–52 (LTWLMEVTPVIIVVQLLLATA). Topologically, residues 53–55 (RRY) are periplasmic. The helical transmembrane segment at 56 to 76 (PLTPLLYTLIFLHAIILMVGG) threads the bilayer. The Cytoplasmic portion of the chain corresponds to 77-131 (QYTYAKVPVGFEVQEWLGLSRNPYDKLGHFFQGLVPALVAREILVRGMYVRGRKM). A helical membrane pass occupies residues 132–152 (VAFLVCCVALAISAMYELIEW). The Periplasmic portion of the chain corresponds to 153-177 (WAALAMGQGADDFLGTQGDQWDTQS). The chain crosses the membrane as a helical span at residues 178-198 (DMFCALLGALTTVIFLARFHC). The Cytoplasmic portion of the chain corresponds to 199–209 (RQLRRFGLITG).

The protein resides in the cell inner membrane. The chain is Inner membrane protein YjdF (yjdF) from Escherichia coli (strain K12).